The following is a 333-amino-acid chain: Diacylglycerol acyltransferase/mycolyltransferase Ag85C (333 aa).

Residues 1-44 (MKFLQQMRKLFGLAAKFPARLTIAVIGTALLAGLVGVVGDTAIA) form the signal peptide. Residue 86–87 (LR) participates in substrate binding. The segment at 102-112 (FEEYYHSGLSV) is fibronectin-binding. Residues serine 170 and asparagine 198 each contribute to the substrate site. Serine 170 (nucleophile) is an active-site residue. Residue glutamate 274 is part of the active site. Substrate-binding positions include 276 to 279 (LTLS) and 306 to 308 (HSW). Histidine 306 is a catalytic residue.

Belongs to the mycobacterial A85 antigen family. As to quaternary structure, homodimer.

The protein localises to the secreted. The catalysed reaction is an acyl-CoA + a 1,2-diacyl-sn-glycerol = a triacyl-sn-glycerol + CoA. It catalyses the reaction 2 alpha,alpha'-trehalose 6-mycolate = alpha,alpha'-trehalose 6,6'-bismycolate + alpha,alpha-trehalose. In terms of biological role, the antigen 85 proteins (FbpA, FbpB, FbpC) are responsible for the high affinity of mycobacteria to fibronectin, a large adhesive glycoprotein, which facilitates the attachment of M.tuberculosis to murine alveolar macrophages (AMs). They also help to maintain the integrity of the cell wall by catalyzing the transfer of mycolic acids to cell wall arabinogalactan and through the synthesis of alpha,alpha-trehalose dimycolate (TDM, cord factor). They catalyze the transfer of a mycoloyl residue from one molecule of alpha,alpha-trehalose monomycolate (TMM) to another TMM, leading to the formation of TDM. The chain is Diacylglycerol acyltransferase/mycolyltransferase Ag85C (fbpC) from Mycobacterium leprae (strain TN).